The sequence spans 246 residues: Serine protease 1 (246 aa).

An N-terminal signal peptide occupies residues 1–17; sequence MKTFIFLALLGAAVAFP. A propeptide spans 18 to 23 (activation peptide); it reads VDDDDK. The region spanning 24–244 is the Peptidase S1 domain; that stretch reads IVGGYTCGAN…YVSWIKQTIA (221 aa). Disulfide bonds link C30–C160, C48–C64, C132–C233, C139–C206, C171–C185, and C196–C220. H63 serves as the catalytic Charge relay system. Ca(2+) is bound by residues E75, N77, V80, and E85. Catalysis depends on D107, which acts as the Charge relay system. Residues 194–195, 197–198, and S200 each bind substrate; these read DS and QG. S200 acts as the Charge relay system in catalysis.

It belongs to the peptidase S1 family. Interacts with SERPINA1. It depends on Ca(2+) as a cofactor. Autocatalytic cleavage after Lys-23 leads to beta-trypsin by releasing a terminal hexapeptide. Subsequent cleavage after Lys-148 leads to alpha-trypsin. Further cleavage after Lys-193 yields pseudotrypsin. A cleavage may also occur after Arg-122. In terms of processing, not sulfated on tyrosine residue(s). Synthesized in the acinar cells of the pancreas.

It is found in the secreted. Its subcellular location is the extracellular space. It catalyses the reaction Preferential cleavage: Arg-|-Xaa, Lys-|-Xaa.. With respect to regulation, is inhibited by scorpion cyclotide trypsin inhibitor TopI1. This is Serine protease 1 (PRSS1) from Bos taurus (Bovine).